The chain runs to 338 residues: Phenylalanine--tRNA ligase alpha subunit (338 aa).

E252 provides a ligand contact to Mg(2+).

Belongs to the class-II aminoacyl-tRNA synthetase family. Phe-tRNA synthetase alpha subunit type 1 subfamily. In terms of assembly, tetramer of two alpha and two beta subunits. Mg(2+) serves as cofactor.

It is found in the cytoplasm. It catalyses the reaction tRNA(Phe) + L-phenylalanine + ATP = L-phenylalanyl-tRNA(Phe) + AMP + diphosphate + H(+). The chain is Phenylalanine--tRNA ligase alpha subunit from Pseudomonas putida (strain ATCC 700007 / DSM 6899 / JCM 31910 / BCRC 17059 / LMG 24140 / F1).